The primary structure comprises 189 residues: MERQEESLSARPALETEGLRFLHTTVGSLLATYGWYIVFSCILLYVVFQKLSARLRALRQRQLDRAAAAVEPDVVVKRQEALAAARLKMQEELNAQVEKHKEKLKQLEEEKRRQKIEMWDSMQEGKSYKGNAKKPQEEDSPGPSTSSVLKRKSDRKPLRGGGYNPLSGEGGGACSWRPGRRGPSSGGUG.

Residues 28–48 (SLLATYGWYIVFSCILLYVVF) form a helical membrane-spanning segment. A VCP/p97-interacting motif (VIM) region spans residues 78-90 (RQEALAAARLKMQ). Positions 115–189 (KIEMWDSMQE…RRGPSSGGUG (75 aa)) are disordered. Serine 140 bears the Phosphoserine mark. Residues 159-173 (RGGGYNPLSGEGGGA) are compositionally biased toward gly residues. A non-standard amino acid (selenocysteine) is located at residue selenocysteine 188.

This sequence belongs to the selenoprotein S family. As to quaternary structure, interacts with DERL1 and (via VIM motif) with VCP, suggesting that it forms a membrane complex with DERL1 that serves as a receptor for VCP. Also interacts with DERL2, DERL3 and SELENOK. The SELENOK-SELENOS complex interacts with VCP. Interacts with CCDC47. Post-translationally, truncated SELENOS proteins produced by failed UGA/Sec decoding are ubiquitinated by the CRL2(KLHDC2) and CRL2(KLHDC3) complexes, which recognizes the glycine (Gly) at the C-terminus of truncated SELENOS proteins. Truncated SELENOS proteins produced by failed UGA/Sec decoding are also ubiquitinated by the CRL5(KLHDC1) complex.

It localises to the endoplasmic reticulum membrane. The protein localises to the cytoplasm. Its function is as follows. Involved in the degradation process of misfolded endoplasmic reticulum (ER) luminal proteins. Participates in the transfer of misfolded proteins from the ER to the cytosol, where they are destroyed by the proteasome in a ubiquitin-dependent manner. Probably acts by serving as a linker between DERL1, which mediates the retrotranslocation of misfolded proteins into the cytosol, and the ATPase complex VCP, which mediates the translocation and ubiquitination. This Homo sapiens (Human) protein is Selenoprotein S.